The sequence spans 223 residues: Phosphoenolpyruvate guanylyltransferase (223 aa).

T140, G156, and S159 together coordinate phosphoenolpyruvate.

Belongs to the CofC family.

It carries out the reaction phosphoenolpyruvate + GTP + H(+) = enolpyruvoyl-2-diphospho-5'-guanosine + diphosphate. Its pathway is cofactor biosynthesis; coenzyme F420 biosynthesis. Functionally, guanylyltransferase that catalyzes the activation of phosphoenolpyruvate (PEP) as enolpyruvoyl-2-diphospho-5'-guanosine, via the condensation of PEP with GTP. It is involved in the biosynthesis of coenzyme F420, a hydride carrier cofactor. The sequence is that of Phosphoenolpyruvate guanylyltransferase from Conexibacter woesei (strain DSM 14684 / CCUG 47730 / CIP 108061 / JCM 11494 / NBRC 100937 / ID131577).